The primary structure comprises 116 residues: Photosystem II reaction center Psb28 protein (116 aa).

The protein belongs to the Psb28 family. In terms of assembly, part of the photosystem II complex.

It is found in the plastid. It localises to the chloroplast thylakoid membrane. The polypeptide is Photosystem II reaction center Psb28 protein (Guillardia theta (Cryptophyte)).